The following is a 261-amino-acid chain: Probable enoyl-CoA hydratase EchA17 (261 aa).

This sequence belongs to the enoyl-CoA hydratase/isomerase family.

The enzyme catalyses a (3S)-3-hydroxyacyl-CoA = a (2E)-enoyl-CoA + H2O. It carries out the reaction a 4-saturated-(3S)-3-hydroxyacyl-CoA = a (3E)-enoyl-CoA + H2O. Its function is as follows. Could possibly oxidize fatty acids using specific components. The sequence is that of Probable enoyl-CoA hydratase EchA17 (echA17) from Mycobacterium bovis (strain BCG / Pasteur 1173P2).